The primary structure comprises 642 residues: Threonine--tRNA ligase (642 aa).

A TGS domain is found at 1–61 (MPVITLPDGS…EHDAQIAIIT (61 aa)). Residues 243–534 (DHRKIGKQLD…LTEEYAGFYP (292 aa)) form a catalytic region. Zn(2+) is bound by residues C334, H385, and H511.

Belongs to the class-II aminoacyl-tRNA synthetase family. As to quaternary structure, homodimer. The cofactor is Zn(2+).

It localises to the cytoplasm. It catalyses the reaction tRNA(Thr) + L-threonine + ATP = L-threonyl-tRNA(Thr) + AMP + diphosphate + H(+). Functionally, catalyzes the attachment of threonine to tRNA(Thr) in a two-step reaction: L-threonine is first activated by ATP to form Thr-AMP and then transferred to the acceptor end of tRNA(Thr). Also edits incorrectly charged L-seryl-tRNA(Thr). The protein is Threonine--tRNA ligase of Sodalis glossinidius (strain morsitans).